Reading from the N-terminus, the 79-residue chain is Dolichyl-diphosphooligosaccharide--protein glycosyltransferase subunit TMEM258 (79 aa).

Helical transmembrane passes span 17–37 and 55–75; these read VFPH…AWFF and LISL…LLWV.

Belongs to the OST5 family. As to quaternary structure, component of the oligosaccharyltransferase (OST) complex.

It is found in the membrane. The protein localises to the endoplasmic reticulum. Its subcellular location is the cytoplasm. It participates in protein modification; protein glycosylation. Functionally, subunit of the oligosaccharyl transferase (OST) complex that catalyzes the initial transfer of a defined glycan (Glc(3)Man(9)GlcNAc(2) in eukaryotes) from the lipid carrier dolichol-pyrophosphate to an asparagine residue within an Asn-X-Ser/Thr consensus motif in nascent polypeptide chains, the first step in protein N-glycosylation. N-glycosylation occurs cotranslationally and the complex associates with the Sec61 complex at the channel-forming translocon complex that mediates protein translocation across the endoplasmic reticulum (ER). All subunits are required for a maximal enzyme activity. The protein is Dolichyl-diphosphooligosaccharide--protein glycosyltransferase subunit TMEM258 of Gallus gallus (Chicken).